The primary structure comprises 468 residues: UDP-N-acetylmuramate--L-alanine ligase (468 aa).

118–124 (GTHGKTT) lines the ATP pocket.

This sequence belongs to the MurCDEF family.

The protein localises to the cytoplasm. It carries out the reaction UDP-N-acetyl-alpha-D-muramate + L-alanine + ATP = UDP-N-acetyl-alpha-D-muramoyl-L-alanine + ADP + phosphate + H(+). It functions in the pathway cell wall biogenesis; peptidoglycan biosynthesis. Cell wall formation. The chain is UDP-N-acetylmuramate--L-alanine ligase from Roseobacter denitrificans (strain ATCC 33942 / OCh 114) (Erythrobacter sp. (strain OCh 114)).